A 203-amino-acid chain; its full sequence is Small ribosomal subunit protein uS2 (203 aa).

The protein belongs to the universal ribosomal protein uS2 family.

This is Small ribosomal subunit protein uS2 from Methanopyrus kandleri (strain AV19 / DSM 6324 / JCM 9639 / NBRC 100938).